The primary structure comprises 876 residues: Alanine--tRNA ligase (876 aa).

Zn(2+) contacts are provided by His-564, His-568, Cys-666, and His-670.

It belongs to the class-II aminoacyl-tRNA synthetase family. As to quaternary structure, homotetramer. Zn(2+) serves as cofactor.

The protein resides in the cytoplasm. The catalysed reaction is tRNA(Ala) + L-alanine + ATP = L-alanyl-tRNA(Ala) + AMP + diphosphate. Functionally, catalyzes the attachment of alanine to tRNA(Ala) in a two-step reaction: alanine is first activated by ATP to form Ala-AMP and then transferred to the acceptor end of tRNA(Ala). Also edits incorrectly charged Ser-tRNA(Ala) and Gly-tRNA(Ala) via its editing domain. The polypeptide is Alanine--tRNA ligase (Salmonella paratyphi B (strain ATCC BAA-1250 / SPB7)).